The primary structure comprises 257 residues: 1-(5-phosphoribosyl)-5-[(5-phosphoribosylamino)methylideneamino] imidazole-4-carboxamide isomerase (257 aa).

Aspartate 8 acts as the Proton acceptor in catalysis. Residue aspartate 129 is the Proton donor of the active site.

The protein belongs to the HisA/HisF family.

It localises to the cytoplasm. The catalysed reaction is 1-(5-phospho-beta-D-ribosyl)-5-[(5-phospho-beta-D-ribosylamino)methylideneamino]imidazole-4-carboxamide = 5-[(5-phospho-1-deoxy-D-ribulos-1-ylimino)methylamino]-1-(5-phospho-beta-D-ribosyl)imidazole-4-carboxamide. It participates in amino-acid biosynthesis; L-histidine biosynthesis; L-histidine from 5-phospho-alpha-D-ribose 1-diphosphate: step 4/9. The protein is 1-(5-phosphoribosyl)-5-[(5-phosphoribosylamino)methylideneamino] imidazole-4-carboxamide isomerase of Rippkaea orientalis (strain PCC 8801 / RF-1) (Cyanothece sp. (strain PCC 8801)).